The primary structure comprises 187 residues: Corticoliberin (187 aa).

A signal peptide spans 1–19 (MRLRLLVSAGMLLVALSSC). The propeptide occupies 20–144 (LPCRALLSRG…HQGALERERR (125 aa)). Disordered regions lie at residues 75–94 (AARLSPNSTPLTAGRGSRPS) and 114–146 (QRSLDSRAEPAERGAEDALGGHQGALERERRSE). Over residues 117–129 (LDSRAEPAERGAE) the composition is skewed to basic and acidic residues. Residue Ile185 is modified to Isoleucine amide.

This sequence belongs to the sauvagine/corticotropin-releasing factor/urotensin I family. As to quaternary structure, interacts (via C-terminus) with CRFR1 (via N-terminal extracellular domain). Expressed in parvocellular paraventricular nucleus of the hypothalamus and in medial accessory olivary nucleus.

It localises to the secreted. Functionally, hormone regulating the release of corticotropin from pituitary gland. Induces NLRP6 in intestinal epithelial cells, hence may influence gut microbiota profile. In Mus musculus (Mouse), this protein is Corticoliberin (Crh).